A 397-amino-acid polypeptide reads, in one-letter code: MKILVLNCGSSSIKYKLFDMKAKSILAQGGVEKIGLTGSFLKLTLPNGKKVILEGEILEHRTGVEYILGVITSEKYGCIRSLSEIDAVGHRVVHGGEKFNSSVLIDDEVIRKITECIDLAPLHNPPNLNGIYAVVELMPSTPQVGVFDTAFHQTMPDFAYMYGLPYSLYEKYAIRRYGFHGTSHRYVSKRACEMLYMSYERQRIISCHIGNGASVTAIKNGISVDTSMGMTPVEGLLMGTRCGDIDAGILTYIMEKENIGTSAISTIINKCSGVLGTSGISSDMREIDDAIEIGNKKAILTSDIYTYKIKKYIGAYTVALEGIDILVFTGGVGENQFRIRQKICDGLEFIGIKIDEATNHIRGKETIISTTDSKVKVVVVPTDEEFMIALDTLSLLS.

A Mg(2+)-binding site is contributed by asparagine 7. Lysine 14 is a binding site for ATP. Residue arginine 91 coordinates substrate. Aspartate 148 functions as the Proton donor/acceptor in the catalytic mechanism. Residues 208–212, 283–285, and 331–335 contribute to the ATP site; these read HIGNG, DMR, and GVGEN. Position 384 (glutamate 384) interacts with Mg(2+).

The protein belongs to the acetokinase family. As to quaternary structure, homodimer. It depends on Mg(2+) as a cofactor. Requires Mn(2+) as cofactor.

Its subcellular location is the cytoplasm. The enzyme catalyses acetate + ATP = acetyl phosphate + ADP. The protein operates within metabolic intermediate biosynthesis; acetyl-CoA biosynthesis; acetyl-CoA from acetate: step 1/2. Catalyzes the formation of acetyl phosphate from acetate and ATP. Can also catalyze the reverse reaction. The polypeptide is Acetate kinase (Azobacteroides pseudotrichonymphae genomovar. CFP2).